A 29-amino-acid polypeptide reads, in one-letter code: Pyridoxal 5'-phosphate synthase subunit PdxS (29 aa).

This sequence belongs to the PdxS/SNZ family. In terms of assembly, in the presence of PdxT, forms a dodecamer of heterodimers.

It catalyses the reaction aldehydo-D-ribose 5-phosphate + D-glyceraldehyde 3-phosphate + L-glutamine = pyridoxal 5'-phosphate + L-glutamate + phosphate + 3 H2O + H(+). It participates in cofactor biosynthesis; pyridoxal 5'-phosphate biosynthesis. Functionally, catalyzes the formation of pyridoxal 5'-phosphate from ribose 5-phosphate (RBP), glyceraldehyde 3-phosphate (G3P) and ammonia. The ammonia is provided by the PdxT subunit. Can also use ribulose 5-phosphate and dihydroxyacetone phosphate as substrates, resulting from enzyme-catalyzed isomerization of RBP and G3P, respectively. This chain is Pyridoxal 5'-phosphate synthase subunit PdxS, found in Clostridium pasteurianum.